The primary structure comprises 902 residues: Potassium/sodium hyperpolarization-activated cyclic nucleotide-gated channel 1 (902 aa).

Residues 1–75 are disordered; it reads MEGGGKPNSA…PAGSFEDAEG (75 aa). The Cytoplasmic segment spans residues 1-131; sequence MEGGGKPNSA…WIIHPYSDFR (131 aa). A helical transmembrane segment spans residues 132–153; the sequence is FYWDLIMLIMMVGNLVIIPVGI. Residues 154–162 are Extracellular-facing; that stretch reads TFFTEQTTT. A helical transmembrane segment spans residues 163–183; the sequence is PWIIFNVASDTVFLLDLIMNF. Residues 184-204 lie on the Cytoplasmic side of the membrane; the sequence is RTGTVNEDSSEIILDPKVIKM. The helical transmembrane segment at 205 to 225 threads the bilayer; it reads NYLKSWFVVDFISSIPVDYIF. Topologically, residues 226 to 249 are extracellular; that stretch reads LIVEKGMDSEVYKTARALRIVRFT. A helical; Voltage-sensor membrane pass occupies residues 250 to 270; it reads KILSLLRLLRLSRLIRYIHQW. At 271-284 the chain is on the cytoplasmic side; the sequence is EEIFHMTYDLASAV. The chain crosses the membrane as a helical span at residues 285-307; it reads VRIFNLIGMMLLLCHWDGCLQFL. The Extracellular portion of the chain corresponds to 308 to 333; it reads VPLLQDFPPDCWVSLNEMVNDSWGKQ. A glycan (N-linked (GlcNAc...) asparagine) is linked at Asn-327. Positions 334 to 355 form an intramembrane region, pore-forming; it reads YSYALFKAMSHMLCIGYGAQAP. Residues 347-351 carry the Selectivity filter motif; the sequence is CIGYG. At 356–360 the chain is on the extracellular side; that stretch reads VSMSD. The helical transmembrane segment at 361–381 threads the bilayer; that stretch reads LWITMLSMIVGATCYAMFVGH. Residues 382–902 lie on the Cytoplasmic side of the membrane; that stretch reads ATALIQSLDS…AEKPRFASNL (521 aa). 3',5'-cyclic AMP contacts are provided by Gly-528, Glu-529, Cys-531, Arg-538, Thr-539, Arg-579, and Arg-582. Disordered regions lie at residues 634-681, 713-824, and 858-902; these read TALN…QPSA, ASQL…VGES, and MSSG…ASNL. Composition is skewed to low complexity over residues 639-680, 720-736, and 744-769; these read TSST…PQPS, QQPQ…QTQP, and QPQQ…QQPQ. Polar residues predominate over residues 770–793; it reads TPGSSTPKNEVHKSTQALHNTNLT. The segment covering 867 to 877 has biased composition (pro residues); that stretch reads RGVPPAPPPPA. Basic and acidic residues predominate over residues 889-902; it reads KDPDAEKPRFASNL.

It belongs to the potassium channel HCN family. In terms of assembly, homotetramer. Heterotetramer with HCN2. The potassium channel is composed of a homo- or heterotetrameric complex of pore-forming subunits. Interacts with KCNE2. Interacts with the SH3 domain of CSK. Highly expressed in cerebral cortex, cerebellum, throughout the hippocampus, in medial habenula, anterior dorsal nucleus in the thalamus, tenia tecta, several nuclei of the general motor system and in optic nerve layer. Detected in a subset of elongated cells in taste buds.

The protein localises to the cell membrane. It catalyses the reaction Na(+)(in) = Na(+)(out). It carries out the reaction K(+)(in) = K(+)(out). Its activity is regulated as follows. Activated by cAMP, and at 10-100 times higher concentrations, also by cGMP. cAMP binding promotes tetramerization and formation of an active channel. Compared to other family members, cAMP has less stimulatory effect on HCN1 because part of the molecules already contain bound cAMP and form homotetramers when cAMP levels are low, this inherent tetramerization in HCN1 results in a weaker response to increased cAMP. In terms of biological role, hyperpolarization-activated ion channel that are permeable to sodium and potassium ions. Exhibits weak selectivity for potassium over sodium ions. Contributes to the native pacemaker currents in heart (If) and in neurons (Ih). Participates in cerebellar mechanisms of motor learning. May mediate responses to sour stimuli. The polypeptide is Potassium/sodium hyperpolarization-activated cyclic nucleotide-gated channel 1 (Hcn1) (Rattus norvegicus (Rat)).